Reading from the N-terminus, the 214-residue chain is Transcriptional regulatory protein ComA (214 aa).

In terms of domain architecture, Response regulatory spans 3 to 121 (KILVIDDHPA…KITQYIYHVL (119 aa)). Aspartate 55 is modified (4-aspartylphosphate). One can recognise an HTH luxR-type domain in the interval 147 to 212 (SQKEQDVLTP…EAVLIAKSDG (66 aa)). Positions 171-190 (NQEIADALHLSKRSIEYSLT) form a DNA-binding region, H-T-H motif.

In terms of processing, phosphorylated by ComP.

Its subcellular location is the cytoplasm. In terms of biological role, response regulator in the two-component regulatory system ComP/ComA involved in a major quorum response pathway that regulates the development of genetic competence. Regulates directly the expression of over 20 genes, including genes of the srfA operon, degQ, rapA, rapC, rapE, rapF, etc. Regulates indirectly, through the regulation of comK transcription, the expression of late competence genes. In Bacillus subtilis (strain 168), this protein is Transcriptional regulatory protein ComA (comA).